Here is a 92-residue protein sequence, read N- to C-terminus: C-C motif chemokine 4 (92 aa).

The first 23 residues, Met-1–Ser-23, serve as a signal peptide directing secretion. Intrachain disulfides connect Cys-34–Cys-58 and Cys-35–Cys-74.

It belongs to the intercrine beta (chemokine CC) family. In terms of assembly, homodimer. Interacts with CCR5.

It localises to the secreted. In terms of biological role, monokine with inflammatory and chemokinetic properties. The chain is C-C motif chemokine 4 (CCL4) from Bos taurus (Bovine).